The primary structure comprises 429 residues: Phosphoglucosamine mutase (429 aa).

Ser-96 acts as the Phosphoserine intermediate in catalysis. The Mg(2+) site is built by Ser-96, Asp-230, Asp-232, and Asp-234. Ser-96 carries the phosphoserine modification.

It belongs to the phosphohexose mutase family. Mg(2+) is required as a cofactor. In terms of processing, activated by phosphorylation.

It catalyses the reaction alpha-D-glucosamine 1-phosphate = D-glucosamine 6-phosphate. Its function is as follows. Catalyzes the conversion of glucosamine-6-phosphate to glucosamine-1-phosphate. The chain is Phosphoglucosamine mutase from Thermotoga petrophila (strain ATCC BAA-488 / DSM 13995 / JCM 10881 / RKU-1).